We begin with the raw amino-acid sequence, 300 residues long: Cation-efflux pump FieF (300 aa).

Helical transmembrane passes span 11 to 31, 40 to 60, 81 to 101, and 114 to 134; these read LAAVSATAVALVLFVMKVFAW, LASLVDSLVDIAASLVNLLVV, LAALAQSMFISGSALFLILTG, and PEVGMWVTLIALVATLLLVSF. Residues D45 and D49 each contribute to the Zn(2+) site. 2 residues coordinate Zn(2+): H153 and D157. 2 helical membrane passes run 156-176 and 182-202; these read SDLLMNGAILVALALSWKGIT and FALGIGVYILYSALRMGYDAV.

This sequence belongs to the cation diffusion facilitator (CDF) transporter (TC 2.A.4) family. FieF subfamily. In terms of assembly, homodimer.

The protein resides in the cell inner membrane. It catalyses the reaction Zn(2+)(in) + H(+)(out) = Zn(2+)(out) + H(+)(in). It carries out the reaction Cd(2+)(in) + H(+)(out) = Cd(2+)(out) + H(+)(in). The catalysed reaction is Fe(2+)(in) + H(+)(out) = Fe(2+)(out) + H(+)(in). Its function is as follows. Divalent metal cation transporter which exports Zn(2+), Cd(2+) and possibly Fe(2+). May be involved in zinc and iron detoxification by efflux. This chain is Cation-efflux pump FieF, found in Pectobacterium atrosepticum (strain SCRI 1043 / ATCC BAA-672) (Erwinia carotovora subsp. atroseptica).